We begin with the raw amino-acid sequence, 218 residues long: Superoxide dismutase [Mn] 1 (218 aa).

H43, H98, D180, and H184 together coordinate Mn(2+).

The protein belongs to the iron/manganese superoxide dismutase family. As to quaternary structure, homodimer. Requires Mn(2+) as cofactor.

The catalysed reaction is 2 superoxide + 2 H(+) = H2O2 + O2. Functionally, destroys superoxide anion radicals which are normally produced within the cells and which are toxic to biological systems. The protein is Superoxide dismutase [Mn] 1 (sodA1) of Bacillus cereus (strain ATCC 14579 / DSM 31 / CCUG 7414 / JCM 2152 / NBRC 15305 / NCIMB 9373 / NCTC 2599 / NRRL B-3711).